The chain runs to 228 residues: UPF0502 protein AZOSEA09860 (228 aa).

Belongs to the UPF0502 family.

This is UPF0502 protein AZOSEA09860 from Aromatoleum aromaticum (strain DSM 19018 / LMG 30748 / EbN1) (Azoarcus sp. (strain EbN1)).